Consider the following 818-residue polypeptide: Serine/threonine-protein phosphatase 4 regulatory subunit 3 (818 aa).

A WH1 domain is found at 1-100 (MTDTRRRVKV…DEIWEKICQV (100 aa)). A compositionally biased stretch (acidic residues) spans 670 to 681 (FNTDEEDLEDGE). Positions 670–818 (FNTDEEDLED…PLSKKSKLSS (149 aa)) are disordered. Residues 703 to 718 (FMERKKLKDSEEKEVL) are compositionally biased toward basic and acidic residues. A compositionally biased stretch (low complexity) spans 729–775 (SPSFKLSFSSSPKASLSSPPTASLHPGSPGSPSSPGTGARSSPPSAA). A phosphoserine mark is found at S769 and S770. The span at 788 to 803 (YPDDDEEDEDEEDADS) shows a compositional bias: acidic residues.

The protein belongs to the SMEK family. As to quaternary structure, serine/threonine-protein phosphatase 4 (PP4) occurs in different assemblies of the catalytic and one or more regulatory subunits.

In terms of biological role, regulatory subunit of serine/threonine-protein phosphatase 4. This chain is Serine/threonine-protein phosphatase 4 regulatory subunit 3 (smek1), found in Danio rerio (Zebrafish).